The primary structure comprises 233 residues: ATP synthase subunit a, chloroplastic (233 aa).

4 helical membrane-spanning segments follow: residues valine 27–leucine 47, valine 84–isoleucine 104, aspartate 122–phenylalanine 142, and valine 192–alanine 212.

The protein belongs to the ATPase A chain family. As to quaternary structure, F-type ATPases have 2 components, CF(1) - the catalytic core - and CF(0) - the membrane proton channel. CF(1) has five subunits: alpha(3), beta(3), gamma(1), delta(1), epsilon(1). CF(0) has four main subunits: a, b, b' and c.

The protein resides in the plastid. It is found in the chloroplast thylakoid membrane. Its function is as follows. Key component of the proton channel; it plays a direct role in the translocation of protons across the membrane. The sequence is that of ATP synthase subunit a, chloroplastic from Ochrosphaera neapolitana.